A 350-amino-acid chain; its full sequence is Biotin synthase (350 aa).

A Radical SAM core domain is found at 38–265; the sequence is NHVQVSTLLS…MSAVRLSAGR (228 aa). [4Fe-4S] cluster contacts are provided by Cys-53, Cys-57, and Cys-60. Cys-97, Cys-128, Cys-188, and Arg-260 together coordinate [2Fe-2S] cluster.

It belongs to the radical SAM superfamily. Biotin synthase family. As to quaternary structure, homodimer. Requires [4Fe-4S] cluster as cofactor. It depends on [2Fe-2S] cluster as a cofactor.

It carries out the reaction (4R,5S)-dethiobiotin + (sulfur carrier)-SH + 2 reduced [2Fe-2S]-[ferredoxin] + 2 S-adenosyl-L-methionine = (sulfur carrier)-H + biotin + 2 5'-deoxyadenosine + 2 L-methionine + 2 oxidized [2Fe-2S]-[ferredoxin]. The protein operates within cofactor biosynthesis; biotin biosynthesis; biotin from 7,8-diaminononanoate: step 2/2. In terms of biological role, catalyzes the conversion of dethiobiotin (DTB) to biotin by the insertion of a sulfur atom into dethiobiotin via a radical-based mechanism. This Vibrio atlanticus (strain LGP32) (Vibrio splendidus (strain Mel32)) protein is Biotin synthase.